The chain runs to 405 residues: Serpin B12 (405 aa).

The interval 64 to 83 is disordered; the sequence is SQNESKEPDPCLKSNKQKAG.

Belongs to the serpin family. Ov-serpin subfamily. As to quaternary structure, interacts with SLFN12; as part of a pathway regulating cell differentiation. May interact with USP14. In terms of tissue distribution, expressed in many tissues, including brain, bone marrow, lymph node, heart, lung, liver, pancreas, testis, ovary, and intestine.

Its subcellular location is the cytoplasm. Functionally, inhibits trypsin and plasmin, but not thrombin, coagulation factor Xa, or urokinase-type plasminogen activator. May play a role in cell differentiation. In Homo sapiens (Human), this protein is Serpin B12 (SERPINB12).